A 364-amino-acid polypeptide reads, in one-letter code: UDP-N-acetylglucosamine--N-acetylmuramyl-(pentapeptide) pyrophosphoryl-undecaprenol N-acetylglucosamine transferase (364 aa).

Residues 16–18 (TGG), Asn-128, Arg-166, Ser-195, Ile-249, and Gln-294 each bind UDP-N-acetyl-alpha-D-glucosamine.

It belongs to the glycosyltransferase 28 family. MurG subfamily.

The protein localises to the cell inner membrane. The enzyme catalyses di-trans,octa-cis-undecaprenyl diphospho-N-acetyl-alpha-D-muramoyl-L-alanyl-D-glutamyl-meso-2,6-diaminopimeloyl-D-alanyl-D-alanine + UDP-N-acetyl-alpha-D-glucosamine = di-trans,octa-cis-undecaprenyl diphospho-[N-acetyl-alpha-D-glucosaminyl-(1-&gt;4)]-N-acetyl-alpha-D-muramoyl-L-alanyl-D-glutamyl-meso-2,6-diaminopimeloyl-D-alanyl-D-alanine + UDP + H(+). Its pathway is cell wall biogenesis; peptidoglycan biosynthesis. Cell wall formation. Catalyzes the transfer of a GlcNAc subunit on undecaprenyl-pyrophosphoryl-MurNAc-pentapeptide (lipid intermediate I) to form undecaprenyl-pyrophosphoryl-MurNAc-(pentapeptide)GlcNAc (lipid intermediate II). This Chromohalobacter salexigens (strain ATCC BAA-138 / DSM 3043 / CIP 106854 / NCIMB 13768 / 1H11) protein is UDP-N-acetylglucosamine--N-acetylmuramyl-(pentapeptide) pyrophosphoryl-undecaprenol N-acetylglucosamine transferase.